Reading from the N-terminus, the 188-residue chain is Large ribosomal subunit protein eL18 (188 aa).

The interval 153-188 (GKAPGTPHSHTKPYVRSKGRKFERARGRRASCGYKN) is disordered. The span at 161 to 171 (SHTKPYVRSKG) shows a compositional bias: basic residues.

It belongs to the eukaryotic ribosomal protein eL18 family. Component of the large ribosomal subunit.

It localises to the cytoplasm. The protein localises to the cytosol. The protein resides in the rough endoplasmic reticulum. In terms of biological role, component of the large ribosomal subunit. The ribosome is a large ribonucleoprotein complex responsible for the synthesis of proteins in the cell. The sequence is that of Large ribosomal subunit protein eL18 (rpl18) from Oreochromis mossambicus (Mozambique tilapia).